Reading from the N-terminus, the 184-residue chain is CDP-archaeol synthase (184 aa).

The next 5 membrane-spanning stretches (helical) occupy residues 4-24 (IIMV…NPGA), 54-74 (FIGG…IIYI), 86-106 (IISA…GDIT), 122-142 (GSLL…FIFA), and 145-165 (FFLE…LTPP).

It belongs to the CDP-archaeol synthase family. The cofactor is Mg(2+).

It is found in the cell membrane. The catalysed reaction is 2,3-bis-O-(geranylgeranyl)-sn-glycerol 1-phosphate + CTP + H(+) = CDP-2,3-bis-O-(geranylgeranyl)-sn-glycerol + diphosphate. Its pathway is membrane lipid metabolism; glycerophospholipid metabolism. In terms of biological role, catalyzes the formation of CDP-2,3-bis-(O-geranylgeranyl)-sn-glycerol (CDP-archaeol) from 2,3-bis-(O-geranylgeranyl)-sn-glycerol 1-phosphate (DGGGP) and CTP. This reaction is the third ether-bond-formation step in the biosynthesis of archaeal membrane lipids. In Picrophilus torridus (strain ATCC 700027 / DSM 9790 / JCM 10055 / NBRC 100828 / KAW 2/3), this protein is CDP-archaeol synthase.